Here is a 400-residue protein sequence, read N- to C-terminus: WD repeat and FYVE domain-containing protein 2 (400 aa).

6 WD repeats span residues 22–61, 66–105, 112–150, 153–192, 197–236, and 240–279; these read GSQE…QYWP, AMPS…NKMT, AHQS…QRLG, RTSA…CTLL, GHTG…GTAI, and GHND…QETP. The FYVE-type zinc-finger motif lies at 281-352; it reads WLDSDSCQKC…VCDSCHEAIT (72 aa). Zn(2+) contacts are provided by cysteine 287, cysteine 290, cysteine 314, cysteine 317, cysteine 322, cysteine 325, cysteine 344, and cysteine 347. The stretch at 364–399 is one WD 7 repeat; sequence DSKHNIVHVHFDATRGWLLTSGTDKVIKLWDMTPVV.

In terms of assembly, homodimer. Interacts (via WD repeats 1-3) with AKT1, AKT2, PRKCZ and PRKCI. Interacts with VAMP2. Forms a complex with VAMP2 and PRKCZ. Interacts with FOXO1. Forms a complex with AKT1 and FOXO1. As to expression, highly expressed in the brain (at protein level).

The protein localises to the endosome. The protein resides in the early endosome. It is found in the cytoplasm. In terms of biological role, acts in an adapter protein-like fashion to mediate the interaction between the kinase PRKCZ and its substrate VAMP2 and increases the PRKCZ-dependent phosphorylation of VAMP2. Positively regulates adipocyte differentiation, by facilitating the phosphorylation and thus inactivation of the anti-adipogenetic transcription factor FOXO1 by the kinase AKT1. Plays a role in endosomal control of AKT2 signaling; required for insulin-stimulated AKT2 phosphorylation and glucose uptake and insulin-stimulated phosphorylation of AKT2 substrates. Participates in transferrin receptor endocytosis. The chain is WD repeat and FYVE domain-containing protein 2 (Wdfy2) from Mus musculus (Mouse).